Consider the following 41-residue polypeptide: uncharacterized protein (41 aa).

The protein resides in the plastid. The protein localises to the chloroplast. This is an uncharacterized protein from Trieres chinensis (Marine centric diatom).